The primary structure comprises 43 residues: Potassium channel toxin gamma-KTx 4.6 (43 aa).

4 disulfides stabilise this stretch: Cys-5–Cys-23, Cys-11–Cys-34, Cys-20–Cys-39, and Cys-24–Cys-41.

Belongs to the ergtoxin family. Gamma-KTx 4 subfamily. As to expression, expressed by the venom gland.

It localises to the secreted. Functionally, reversibly blocks Kv11/ERG potassium channels. The protein is Potassium channel toxin gamma-KTx 4.6 of Centruroides limpidus (Mexican scorpion).